An 80-amino-acid polypeptide reads, in one-letter code: Large ribosomal subunit protein bL28 (80 aa).

The disordered stretch occupies residues 1–23; that stretch reads MARVCQITGKKTRTGNNVSHANN.

The protein belongs to the bacterial ribosomal protein bL28 family.

This Cytophaga hutchinsonii (strain ATCC 33406 / DSM 1761 / CIP 103989 / NBRC 15051 / NCIMB 9469 / D465) protein is Large ribosomal subunit protein bL28.